The following is a 194-amino-acid chain: tRNA (guanine-N(1)-)-methyltransferase (194 aa).

S-adenosyl-L-methionine contacts are provided by residues G78 and 97-102 (IGDYVL).

The protein belongs to the RNA methyltransferase TrmD family. In terms of assembly, homodimer.

The protein localises to the cytoplasm. The enzyme catalyses guanosine(37) in tRNA + S-adenosyl-L-methionine = N(1)-methylguanosine(37) in tRNA + S-adenosyl-L-homocysteine + H(+). Specifically methylates guanosine-37 in various tRNAs. This is tRNA (guanine-N(1)-)-methyltransferase from Mycoplasma mobile (strain ATCC 43663 / 163K / NCTC 11711) (Mesomycoplasma mobile).